Consider the following 314-residue polypeptide: tRNA-cytidine(32) 2-sulfurtransferase (314 aa).

The short motif at 49 to 54 is the PP-loop motif element; that stretch reads SGGKDS. C124, C127, and C215 together coordinate [4Fe-4S] cluster.

It belongs to the TtcA family. As to quaternary structure, homodimer. It depends on Mg(2+) as a cofactor. [4Fe-4S] cluster is required as a cofactor.

Its subcellular location is the cytoplasm. The enzyme catalyses cytidine(32) in tRNA + S-sulfanyl-L-cysteinyl-[cysteine desulfurase] + AH2 + ATP = 2-thiocytidine(32) in tRNA + L-cysteinyl-[cysteine desulfurase] + A + AMP + diphosphate + H(+). Its pathway is tRNA modification. Its function is as follows. Catalyzes the ATP-dependent 2-thiolation of cytidine in position 32 of tRNA, to form 2-thiocytidine (s(2)C32). The sulfur atoms are provided by the cysteine/cysteine desulfurase (IscS) system. In Histophilus somni (strain 129Pt) (Haemophilus somnus), this protein is tRNA-cytidine(32) 2-sulfurtransferase.